Consider the following 217-residue polypeptide: Guanylate kinase (217 aa).

The Guanylate kinase-like domain maps to 15-194; the sequence is GLMLVLSSPS…AYQRLKRILL (180 aa). 22–29 contacts ATP; the sequence is SPSGAGKT.

The protein belongs to the guanylate kinase family.

The protein localises to the cytoplasm. It carries out the reaction GMP + ATP = GDP + ADP. In terms of biological role, essential for recycling GMP and indirectly, cGMP. The polypeptide is Guanylate kinase (Hyphomonas neptunium (strain ATCC 15444)).